We begin with the raw amino-acid sequence, 84 residues long: Small ribosomal subunit protein eS27 (84 aa).

Positions 1 to 16 (MPLAKDLLHPTPEEEK) are enriched in basic and acidic residues. The tract at residues 1 to 23 (MPLAKDLLHPTPEEEKRKHKKKR) is disordered. Residues 37–59 (CPGCYKITTVFSHAQTVVLCVGC) form a C4-type zinc finger.

It belongs to the eukaryotic ribosomal protein eS27 family. Component of the small ribosomal subunit. Part of the small subunit (SSU) processome, composed of more than 70 proteins and the RNA chaperone small nucleolar RNA (snoRNA) U3. It depends on Zn(2+) as a cofactor.

It is found in the cytoplasm. Its subcellular location is the nucleus. The protein localises to the nucleolus. In terms of biological role, component of the small ribosomal subunit. The ribosome is a large ribonucleoprotein complex responsible for the synthesis of proteins in the cell. Required for proper rRNA processing and maturation of 18S rRNAs. Part of the small subunit (SSU) processome, first precursor of the small eukaryotic ribosomal subunit. During the assembly of the SSU processome in the nucleolus, many ribosome biogenesis factors, an RNA chaperone and ribosomal proteins associate with the nascent pre-rRNA and work in concert to generate RNA folding, modifications, rearrangements and cleavage as well as targeted degradation of pre-ribosomal RNA by the RNA exosome. The protein is Small ribosomal subunit protein eS27 (rps27) of Xenopus laevis (African clawed frog).